A 505-amino-acid polypeptide reads, in one-letter code: GMP synthase [glutamine-hydrolyzing] (505 aa).

Residues 2 to 190 form the Glutamine amidotransferase type-1 domain; the sequence is SVVILDFGSQ…FLEICGVARD (189 aa). Cysteine 79 (nucleophile) is an active-site residue. Active-site residues include histidine 165 and glutamate 167. In terms of domain architecture, GMPS ATP-PPase spans 191–380; that stretch reads WNAEHIVDEL…LGLPDAIRMR (190 aa). 218–224 is an ATP binding site; sequence SGGVDSS.

In terms of assembly, homodimer.

It catalyses the reaction XMP + L-glutamine + ATP + H2O = GMP + L-glutamate + AMP + diphosphate + 2 H(+). It functions in the pathway purine metabolism; GMP biosynthesis; GMP from XMP (L-Gln route): step 1/1. Catalyzes the synthesis of GMP from XMP. This chain is GMP synthase [glutamine-hydrolyzing], found in Deinococcus geothermalis (strain DSM 11300 / CIP 105573 / AG-3a).